The sequence spans 343 residues: Phenylalanine--tRNA ligase alpha subunit (343 aa).

Residue Glu-256 participates in Mg(2+) binding.

It belongs to the class-II aminoacyl-tRNA synthetase family. Phe-tRNA synthetase alpha subunit type 1 subfamily. In terms of assembly, tetramer of two alpha and two beta subunits. Requires Mg(2+) as cofactor.

Its subcellular location is the cytoplasm. It carries out the reaction tRNA(Phe) + L-phenylalanine + ATP = L-phenylalanyl-tRNA(Phe) + AMP + diphosphate + H(+). This is Phenylalanine--tRNA ligase alpha subunit from Aster yellows witches'-broom phytoplasma (strain AYWB).